The primary structure comprises 131 residues: Small ribosomal subunit protein uS11 (131 aa).

Belongs to the universal ribosomal protein uS11 family. As to quaternary structure, part of the 30S ribosomal subunit. Interacts with proteins S7 and S18. Binds to IF-3.

Located on the platform of the 30S subunit, it bridges several disparate RNA helices of the 16S rRNA. Forms part of the Shine-Dalgarno cleft in the 70S ribosome. In Deinococcus geothermalis (strain DSM 11300 / CIP 105573 / AG-3a), this protein is Small ribosomal subunit protein uS11.